The primary structure comprises 36 residues: U14-ctenitoxin-Co1b (36 aa).

As to expression, expressed by the venom gland.

It localises to the secreted. Not toxic to mice by intracerebroventricular injection. The chain is U14-ctenitoxin-Co1b from Ctenus ornatus (Brazilian spider).